The chain runs to 276 residues: Type III pantothenate kinase (276 aa).

18 to 25 (EIGNSRLH) contacts ATP. Substrate is bound by residues Y116 and 120-123 (GIDR). The active-site Proton acceptor is D122. Residue D142 coordinates K(+). T145 serves as a coordination point for ATP. Residue T200 coordinates substrate.

It belongs to the type III pantothenate kinase family. As to quaternary structure, homodimer. It depends on NH4(+) as a cofactor. Requires K(+) as cofactor.

The protein localises to the cytoplasm. It catalyses the reaction (R)-pantothenate + ATP = (R)-4'-phosphopantothenate + ADP + H(+). Its pathway is cofactor biosynthesis; coenzyme A biosynthesis; CoA from (R)-pantothenate: step 1/5. Functionally, catalyzes the phosphorylation of pantothenate (Pan), the first step in CoA biosynthesis. The protein is Type III pantothenate kinase of Nostoc sp. (strain PCC 7120 / SAG 25.82 / UTEX 2576).